We begin with the raw amino-acid sequence, 595 residues long: Merlin (595 aa).

At serine 13 the chain carries Phosphoserine. The FERM domain occupies 22-311 (FTVRIVTMDA…GNHDLFMRRR (290 aa)). Serine 518 carries the post-translational modification Phosphoserine; by PAK.

Interacts with NHERF1, HGS and AGAP2. Interacts with LAYN. Interacts with SGSM3. Interacts (via FERM domain) with MPP1. Interacts with WWC1. Interacts with the CUL4A-RBX1-DDB1-VprBP/DCAF1 E3 ubiquitin-protein ligase complex. The unphosphorylated form interacts (via FERM domain) with VPRBP/DCAF1. Interacts (via FERM domain) with NOP53; the interaction is direct. Interacts with SCHIP1; the interaction is direct. In terms of processing, phosphorylation of Ser-518 inhibits nuclear localization by disrupting the intramolecular association of the FERM domain with the C-terminal tail. The dephosphorylation of Ser-518 favors the interaction with NOP53. Ubiquitinated by the CUL4A-RBX1-DDB1-DCAF1/VprBP E3 ubiquitin-protein ligase complex for ubiquitination and subsequent proteasome-dependent degradation. In terms of tissue distribution, widely expressed. Isoform 1 and isoform 3 are predominant. Isoform 4, isoform 5 and isoform 6 are expressed moderately. Isoform 8 is found at low frequency. Isoform 7, isoform 9 and isoform 10 are not expressed in adult tissues, with the exception of adult retina expressing isoform 10. Isoform 9 is faintly expressed in fetal brain, heart, lung, skeletal muscle and spleen. Fetal thymus expresses isoforms 1, 7, 9 and 10 at similar levels.

The protein resides in the cell projection. The protein localises to the filopodium membrane. Its subcellular location is the ruffle membrane. It localises to the nucleus. It is found in the cytoplasm. The protein resides in the perinuclear region. The protein localises to the cytoplasmic granule. Its subcellular location is the cytoskeleton. Functionally, probable regulator of the Hippo/SWH (Sav/Wts/Hpo) signaling pathway, a signaling pathway that plays a pivotal role in tumor suppression by restricting proliferation and promoting apoptosis. Along with WWC1 can synergistically induce the phosphorylation of LATS1 and LATS2 and can probably function in the regulation of the Hippo/SWH (Sav/Wts/Hpo) signaling pathway. May act as a membrane stabilizing protein. May inhibit PI3 kinase by binding to AGAP2 and impairing its stimulating activity. Suppresses cell proliferation and tumorigenesis by inhibiting the CUL4A-RBX1-DDB1-VprBP/DCAF1 E3 ubiquitin-protein ligase complex. The protein is Merlin (NF2) of Homo sapiens (Human).